We begin with the raw amino-acid sequence, 282 residues long: Pantothenate synthetase (282 aa).

30 to 37 lines the ATP pocket; sequence MGALHAGH. H37 (proton donor) is an active-site residue. Q61 is a (R)-pantoate binding site. Q61 contributes to the beta-alanine binding site. Position 147 to 150 (147 to 150) interacts with ATP; sequence GEKD. Q153 serves as a coordination point for (R)-pantoate. Residues V176 and 184 to 187 each bind ATP; that span reads LSSR.

This sequence belongs to the pantothenate synthetase family. In terms of assembly, homodimer.

The protein resides in the cytoplasm. The catalysed reaction is (R)-pantoate + beta-alanine + ATP = (R)-pantothenate + AMP + diphosphate + H(+). The protein operates within cofactor biosynthesis; (R)-pantothenate biosynthesis; (R)-pantothenate from (R)-pantoate and beta-alanine: step 1/1. Functionally, catalyzes the condensation of pantoate with beta-alanine in an ATP-dependent reaction via a pantoyl-adenylate intermediate. The protein is Pantothenate synthetase of Bacteroides thetaiotaomicron (strain ATCC 29148 / DSM 2079 / JCM 5827 / CCUG 10774 / NCTC 10582 / VPI-5482 / E50).